A 985-amino-acid polypeptide reads, in one-letter code: Alpha-glucosidase (985 aa).

A signal peptide spans 1-25 (MAGLKSFLASSWLLPVACGASQSIV). N-linked (GlcNAc...) asparagine glycans are attached at residues Asn-126, Asn-145, Asn-220, Asn-255, Asn-349, and Asn-424. The active-site Nucleophile is the Asp-492. Residue Glu-495 is part of the active site. 5 N-linked (GlcNAc...) asparagine glycosylation sites follow: Asn-508, Asn-536, Asn-539, Asn-602, and Asn-624. Asp-660 serves as the catalytic Proton donor. Asn-661, Asn-835, Asn-881, Asn-929, and Asn-957 each carry an N-linked (GlcNAc...) asparagine glycan.

The protein belongs to the glycosyl hydrolase 31 family.

The catalysed reaction is Hydrolysis of terminal, non-reducing (1-&gt;4)-linked alpha-D-glucose residues with release of alpha-D-glucose.. Its function is as follows. Hydrolyzes malto-oligosaccharides, but has a low activity toward soluble starch. This Aspergillus oryzae (strain ATCC 42149 / RIB 40) (Yellow koji mold) protein is Alpha-glucosidase (agdA).